The chain runs to 398 residues: Na(+)/H(+) antiporter NhaA (398 aa).

11 helical membrane passes run 21–41 (LGGY…NSPL), 66–86 (VLHW…GLEI), 101–121 (IVLP…VYLL), 132–152 (GWAI…ALLG), 161–181 (IFLT…IAVF), 184–204 (AELN…LCVL), 216–236 (LLVG…ATLA), 274–294 (LLIV…GMGI), 305–325 (IALG…WLAI), 343–363 (GVAL…ALAF), and 374–394 (IGVL…LRVL).

This sequence belongs to the NhaA Na(+)/H(+) (TC 2.A.33) antiporter family.

Its subcellular location is the cell inner membrane. The catalysed reaction is Na(+)(in) + 2 H(+)(out) = Na(+)(out) + 2 H(+)(in). In terms of biological role, na(+)/H(+) antiporter that extrudes sodium in exchange for external protons. This chain is Na(+)/H(+) antiporter NhaA, found in Bordetella bronchiseptica (strain ATCC BAA-588 / NCTC 13252 / RB50) (Alcaligenes bronchisepticus).